A 233-amino-acid chain; its full sequence is Probable transglycosylase IsaA (233 aa).

Residues 1 to 29 (MKKTIMASSLAVALGVTGYAAGTGHQAHA) form the signal peptide.

It belongs to the transglycosylase family. IsaA subfamily.

The protein localises to the secreted. Is able to cleave peptidoglycan. In Staphylococcus aureus (strain USA300), this protein is Probable transglycosylase IsaA (isaA).